The sequence spans 463 residues: Siroheme synthase 1 (463 aa).

The segment at 1–203 (MDFLPLFCQL…GQQQAAEESV (203 aa)) is precorrin-2 dehydrogenase /sirohydrochlorin ferrochelatase. NAD(+)-binding positions include 22–23 (EV) and 43–44 (PH). The residue at position 128 (serine 128) is a Phosphoserine. A uroporphyrinogen-III C-methyltransferase region spans residues 215–463 (GSVTLVGAGP…YGEANTLAGV (249 aa)). Proline 224 contributes to the S-adenosyl-L-methionine binding site. The active-site Proton acceptor is the aspartate 247. The active-site Proton donor is lysine 269. Residues 300–302 (GGD), isoleucine 305, 330–331 (TA), methionine 382, and glycine 411 each bind S-adenosyl-L-methionine.

The protein in the N-terminal section; belongs to the precorrin-2 dehydrogenase / sirohydrochlorin ferrochelatase family. It in the C-terminal section; belongs to the precorrin methyltransferase family.

It catalyses the reaction uroporphyrinogen III + 2 S-adenosyl-L-methionine = precorrin-2 + 2 S-adenosyl-L-homocysteine + H(+). The enzyme catalyses precorrin-2 + NAD(+) = sirohydrochlorin + NADH + 2 H(+). It carries out the reaction siroheme + 2 H(+) = sirohydrochlorin + Fe(2+). The protein operates within cofactor biosynthesis; adenosylcobalamin biosynthesis; precorrin-2 from uroporphyrinogen III: step 1/1. It participates in cofactor biosynthesis; adenosylcobalamin biosynthesis; sirohydrochlorin from precorrin-2: step 1/1. Its pathway is porphyrin-containing compound metabolism; siroheme biosynthesis; precorrin-2 from uroporphyrinogen III: step 1/1. It functions in the pathway porphyrin-containing compound metabolism; siroheme biosynthesis; siroheme from sirohydrochlorin: step 1/1. The protein operates within porphyrin-containing compound metabolism; siroheme biosynthesis; sirohydrochlorin from precorrin-2: step 1/1. Multifunctional enzyme that catalyzes the SAM-dependent methylations of uroporphyrinogen III at position C-2 and C-7 to form precorrin-2 via precorrin-1. Then it catalyzes the NAD-dependent ring dehydrogenation of precorrin-2 to yield sirohydrochlorin. Finally, it catalyzes the ferrochelation of sirohydrochlorin to yield siroheme. In Aeromonas hydrophila subsp. hydrophila (strain ATCC 7966 / DSM 30187 / BCRC 13018 / CCUG 14551 / JCM 1027 / KCTC 2358 / NCIMB 9240 / NCTC 8049), this protein is Siroheme synthase 1.